The primary structure comprises 601 residues: Elongation factor 4 (601 aa).

Positions 7-189 (SLIRNFSIIA…ALVTRLPPPV (183 aa)) constitute a tr-type G domain. GTP contacts are provided by residues 19 to 24 (DHGKST) and 136 to 139 (NKVD).

The protein belongs to the TRAFAC class translation factor GTPase superfamily. Classic translation factor GTPase family. LepA subfamily.

It is found in the cell inner membrane. It catalyses the reaction GTP + H2O = GDP + phosphate + H(+). Functionally, required for accurate and efficient protein synthesis under certain stress conditions. May act as a fidelity factor of the translation reaction, by catalyzing a one-codon backward translocation of tRNAs on improperly translocated ribosomes. Back-translocation proceeds from a post-translocation (POST) complex to a pre-translocation (PRE) complex, thus giving elongation factor G a second chance to translocate the tRNAs correctly. Binds to ribosomes in a GTP-dependent manner. The sequence is that of Elongation factor 4 from Gluconacetobacter diazotrophicus (strain ATCC 49037 / DSM 5601 / CCUG 37298 / CIP 103539 / LMG 7603 / PAl5).